Here is a 477-residue protein sequence, read N- to C-terminus: Ankyrin repeat, SAM and basic leucine zipper domain-containing protein 1 (477 aa).

A disordered region spans residues 1–24 (MAASSLWGPAVAGGGESSESEDDG). Residues Ser17, Ser18, and Ser20 each carry the phosphoserine modification. 6 ANK repeats span residues 45 to 74 (EKNE…SVDS), 78 to 107 (YGWT…NASF), 110 to 144 (DKQT…DPNV), 148 to 177 (RQMT…EVNA), 181 to 210 (NGYT…NKML), and 214 to 243 (DGKT…PLEG). The region spanning 272–334 (SYTAFGELDL…KILSALKELM (63 aa)) is the SAM domain.

In terms of assembly, interacts with DDX4, PIWIL1, RANBP9 and TDRD1.

It is found in the cytoplasm. Functionally, plays a central role during spermatogenesis by repressing transposable elements and preventing their mobilization, which is essential for the germline integrity. Acts via the piRNA metabolic process, which mediates the repression of transposable elements during meiosis by forming complexes composed of piRNAs and Piwi proteins and governs the methylation and subsequent repression of transposons. Its association with pi-bodies suggests a participation in the primary piRNAs metabolic process. Required prior to the pachytene stage to facilitate the production of multiple types of piRNAs, including those associated with repeats involved in the regulation of retrotransposons. May act by mediating protein-protein interactions during germ cell maturation. The chain is Ankyrin repeat, SAM and basic leucine zipper domain-containing protein 1 (ASZ1) from Echinops telfairi (Lesser hedgehog tenrec).